The sequence spans 215 residues: Beta-crystallin A3-1 (215 aa).

The N-terminal arm stretch occupies residues Met1–Pro30. Beta/gamma crystallin 'Greek key' domains are found at residues Trp31 to Cys70 and Gly71 to Cys117. A connecting peptide region spans residues Ser118–Glu123. Beta/gamma crystallin 'Greek key' domains follow at residues Ser124–Cys165 and Gly166–Gln214.

This sequence belongs to the beta/gamma-crystallin family. As to quaternary structure, homo/heterodimer, or complexes of higher-order. The structure of beta-crystallin oligomers seems to be stabilized through interactions between the N-terminal arms. In terms of processing, the N-terminus is blocked.

Functionally, crystallins are the dominant structural components of the vertebrate eye lens. In Aquarana catesbeiana (American bullfrog), this protein is Beta-crystallin A3-1.